A 92-amino-acid polypeptide reads, in one-letter code: Small ribosomal subunit protein uS19c (92 aa).

It belongs to the universal ribosomal protein uS19 family.

It localises to the plastid. The protein resides in the chloroplast. Functionally, protein S19 forms a complex with S13 that binds strongly to the 16S ribosomal RNA. The sequence is that of Small ribosomal subunit protein uS19c from Nasturtium officinale (Watercress).